We begin with the raw amino-acid sequence, 347 residues long: NADH-ubiquinone oxidoreductase chain 2 (347 aa).

The next 11 membrane-spanning stretches (helical) occupy residues proline 3–serine 23, histidine 25–methionine 45, serine 67–methionine 87, methionine 96–proline 116, isoleucine 122–leucine 142, isoleucine 145–glycine 165, isoleucine 178–proline 198, methionine 200–methionine 220, isoleucine 239–glycine 259, asparagine 274–methionine 294, and phenylalanine 325–valine 345.

The protein belongs to the complex I subunit 2 family. As to quaternary structure, core subunit of respiratory chain NADH dehydrogenase (Complex I) which is composed of 45 different subunits. Interacts with TMEM242.

It is found in the mitochondrion inner membrane. It carries out the reaction a ubiquinone + NADH + 5 H(+)(in) = a ubiquinol + NAD(+) + 4 H(+)(out). Core subunit of the mitochondrial membrane respiratory chain NADH dehydrogenase (Complex I) which catalyzes electron transfer from NADH through the respiratory chain, using ubiquinone as an electron acceptor. Essential for the catalytic activity and assembly of complex I. This is NADH-ubiquinone oxidoreductase chain 2 from Bos indicus (Zebu).